The following is a 354-amino-acid chain: Short-chain dehydrogenase/reductase SAT2 (354 aa).

NADP(+) contacts are provided by Ile-31, Asp-85, Arg-201, and Val-233.

This sequence belongs to the short-chain dehydrogenases/reductases (SDR) family.

The protein operates within mycotoxin biosynthesis. Its function is as follows. Short-chain dehydrogenase/reductase; part of the satratoxin SC1 cluster involved in the biosynthesis of satratoxins, trichothecene mycotoxins that are associated with human food poisonings. Satratoxins are suggested to be made by products of multiple gene clusters (SC1, SC2 and SC3) that encode 21 proteins in all, including polyketide synthases, acetyltransferases, and other enzymes expected to modify the trichothecene skeleton. SC1 encodes 10 proteins, SAT1 to SAT10. The largest are SAT8, which encodes a putative polyketide synthase (PKS) with a conventional non-reducing architecture, and SAT10, a putative protein containing four ankyrin repeats and thus may be involved in protein scaffolding. The putative short-chain reductase SAT3 may assist the PKS in some capacity. SAT6 contains a secretory lipase domain and acts probably as a trichothecene esterase. SAT5 encodes a putative acetyltransferase, and so, with SAT6, may affect endogenous protection from toxicity. The probable transcription factor SAT9 may regulate the expression of the SC1 cluster. SC2 encodes proteins SAT11 to SAT16, the largest of which encodes the putative reducing PKS SAT13. SAT11 is a cytochrome P450 monooxygenase, while SAT14 and SAT16 are probable acetyltransferases. The SC2 cluster may be regulated by the transcription factor SAT15. SC3 is a small cluster that encodes 5 proteins, SAT17 to SAT21. SAT21 is a putative MFS-type transporter which may have a role in exporting secondary metabolites. The four other proteins putatively encoded in SC3 include the taurine hydroxylase-like protein SAT17, the O-methyltransferase SAT18, the acetyltransferase SAT19, and the Cys6-type zinc finger SAT20, the latter being probably involved in regulation of SC3 expression. This chain is Short-chain dehydrogenase/reductase SAT2, found in Stachybotrys chartarum (strain CBS 109288 / IBT 7711) (Toxic black mold).